We begin with the raw amino-acid sequence, 347 residues long: MSVMFDPDTAIYPFPPKPTPLSIDEKAYYREKIKRLLKERNAVMVAHYYTDPEIQQLAEETGGCISDSLEMARFGAKHPASTLLVAGVRFMGETAKILSPEKTILMPTLQAECSLDLGCPVEEFNAFCDAHPDRTVVVYANTSAAVKARADWVVTSSIAVELIDHLDSLGEKIIWAPDKHLGRYVQKKTGADILCWQGACIVHDEFKTQALTRLQEEYPDAAILVHPESPQAIVDMADAVGSTSQLIAAAKTLPHQRLIVATDRGIFYKMQQAVPDKELLEAPTAGEGATCRSCAHCPWMAMNGLQAIAEALEQEGSNYEVHVDERLRERALVPLNRMLDFAATLRG.

Iminosuccinate-binding residues include His47 and Ser68. Residue Cys113 participates in [4Fe-4S] cluster binding. Residues 139 to 141 (YAN) and Ser156 each bind iminosuccinate. Cys200 serves as a coordination point for [4Fe-4S] cluster. Residues 226 to 228 (HPE) and Thr243 contribute to the iminosuccinate site. [4Fe-4S] cluster is bound at residue Cys297.

Belongs to the quinolinate synthase family. Type 1 subfamily. The cofactor is [4Fe-4S] cluster.

Its subcellular location is the cytoplasm. It carries out the reaction iminosuccinate + dihydroxyacetone phosphate = quinolinate + phosphate + 2 H2O + H(+). Its pathway is cofactor biosynthesis; NAD(+) biosynthesis; quinolinate from iminoaspartate: step 1/1. Catalyzes the condensation of iminoaspartate with dihydroxyacetone phosphate to form quinolinate. The protein is Quinolinate synthase of Escherichia coli O157:H7.